Consider the following 509-residue polypeptide: Bifunctional purine biosynthesis protein PurH (509 aa).

The region spanning 1–146 (MTIQKINRVL…KNWYRVGVCV (146 aa)) is the MGS-like domain.

Belongs to the PurH family.

The catalysed reaction is (6R)-10-formyltetrahydrofolate + 5-amino-1-(5-phospho-beta-D-ribosyl)imidazole-4-carboxamide = 5-formamido-1-(5-phospho-D-ribosyl)imidazole-4-carboxamide + (6S)-5,6,7,8-tetrahydrofolate. It carries out the reaction IMP + H2O = 5-formamido-1-(5-phospho-D-ribosyl)imidazole-4-carboxamide. It functions in the pathway purine metabolism; IMP biosynthesis via de novo pathway; 5-formamido-1-(5-phospho-D-ribosyl)imidazole-4-carboxamide from 5-amino-1-(5-phospho-D-ribosyl)imidazole-4-carboxamide (10-formyl THF route): step 1/1. It participates in purine metabolism; IMP biosynthesis via de novo pathway; IMP from 5-formamido-1-(5-phospho-D-ribosyl)imidazole-4-carboxamide: step 1/1. This Natranaerobius thermophilus (strain ATCC BAA-1301 / DSM 18059 / JW/NM-WN-LF) protein is Bifunctional purine biosynthesis protein PurH.